Consider the following 103-residue polypeptide: Small ribosomal subunit protein uS10 (103 aa).

The protein belongs to the universal ribosomal protein uS10 family. As to quaternary structure, part of the 30S ribosomal subunit.

In terms of biological role, involved in the binding of tRNA to the ribosomes. This is Small ribosomal subunit protein uS10 from Neisseria meningitidis serogroup C / serotype 2a (strain ATCC 700532 / DSM 15464 / FAM18).